Reading from the N-terminus, the 253-residue chain is UPF0280 protein MA_1715 (253 aa).

It belongs to the UPF0280 family.

The sequence is that of UPF0280 protein MA_1715 from Methanosarcina acetivorans (strain ATCC 35395 / DSM 2834 / JCM 12185 / C2A).